The sequence spans 136 residues: Nucleoside diphosphate kinase (136 aa).

ATP is bound by residues Lys-10, Phe-58, Arg-86, Thr-92, Arg-104, and Asn-114. The Pros-phosphohistidine intermediate role is filled by His-117.

The protein belongs to the NDK family. In terms of assembly, homotetramer. Mg(2+) is required as a cofactor.

It localises to the cytoplasm. It carries out the reaction a 2'-deoxyribonucleoside 5'-diphosphate + ATP = a 2'-deoxyribonucleoside 5'-triphosphate + ADP. The catalysed reaction is a ribonucleoside 5'-diphosphate + ATP = a ribonucleoside 5'-triphosphate + ADP. In terms of biological role, major role in the synthesis of nucleoside triphosphates other than ATP. The ATP gamma phosphate is transferred to the NDP beta phosphate via a ping-pong mechanism, using a phosphorylated active-site intermediate. This Mycobacterium avium (strain 104) protein is Nucleoside diphosphate kinase.